A 331-amino-acid polypeptide reads, in one-letter code: Probable inactive O-methyltransferase 11 (331 aa).

S-adenosyl-L-methionine is bound by residues Gly-179, Asp-202, 224-226, Asp-225, Phe-226, and Lys-239; that span reads GDF.

This sequence belongs to the class I-like SAM-binding methyltransferase superfamily. Cation-independent O-methyltransferase family. COMT subfamily.

The polypeptide is Probable inactive O-methyltransferase 11 (omt11) (Dictyostelium discoideum (Social amoeba)).